The following is a 526-amino-acid chain: Neutrophil cytosol factor 2 (526 aa).

3 TPR repeats span residues Ser37–Leu70, Ala71–Asn104, and Cys121–Pro154. Thr233 bears the Phosphothreonine mark. The SH3 1 domain occupies Leu240 to Leu299. Over residues Pro303–Ser315 the composition is skewed to low complexity. The segment at Pro303 to Leu346 is disordered. Positions Lys336–Lys345 are enriched in basic and acidic residues. In terms of domain architecture, PB1 spans Pro351–Thr429. Phosphoserine is present on Ser399. A disordered region spans residues Gln433–Lys458. The segment covering Asp437–Asp446 has biased composition (basic and acidic residues). In terms of domain architecture, SH3 2 spans Lys457–Thr516.

This sequence belongs to the NCF2/NOXA1 family. As to quaternary structure, component of the phagocyte NADPH oxidase complex composed of an obligatory core heterodimer formed by the membrane proteins CYBA and CYBB and the cytosolic regulatory subunits NCF1/p47-phox, NCF2/p67-phox, NCF4/p40-phox and the small GTPase RAC1 or RAC2. Part of a cytosolic complex composed at least by NCF1, NCF2 and NCF4. Interacts with NCF4. Interacts (via the C-terminal SH3 domain) with NCF1 (via C-terminus). Interacts with SYTL1 and RAC1. May interact with NOXO1. Interacts with S100A8 and calprotectin (S100A8/9). Interacts with GBP7 (via GB1/RHD3-type G domain). Interacts with CYBB; the interaction is enhanced in the presence of GBP7.

The protein resides in the cytoplasm. Subunit of the phagocyte NADPH oxidase complex that mediates the transfer of electrons from cytosolic NADPH to O2 to produce the superoxide anion (O2(-)). In the activated complex, electrons are first transferred from NADPH to flavin adenine dinucleotide (FAD) and subsequently transferred via two heme molecules to molecular oxygen, producing superoxide through an outer-sphere reaction. Activation of the NADPH oxidase complex is initiated by the assembly of cytosolic subunits of the NADPH oxidase complex with the core NADPH oxidase complex to form a complex at the plasma membrane or phagosomal membrane. This activation process is initiated by phosphorylation dependent binding of the cytosolic NCF1/p47-phox subunit to the C-terminus of CYBA/p22-phox. This Homo sapiens (Human) protein is Neutrophil cytosol factor 2.